Reading from the N-terminus, the 168-residue chain is tRNA-splicing endonuclease subunit Sen15 (168 aa).

Residues 1-32 (MEERSDSEPTPGCSGPGPAPVRDGGGAHTWAP) are disordered. Phosphoserine is present on residues S7 and S165.

The protein belongs to the SEN15 family. Homodimer. tRNA splicing endonuclease is a heterotetramer composed of TSEN2, TSEN15, TSEN34/LENG5 and TSEN54. tRNA splicing endonuclease complex also contains proteins of the pre-mRNA 3' end processing machinery such as CLP1, CPSF1, CPSF4 and CSTF2.

Its subcellular location is the nucleus. The protein resides in the nucleolus. Non-catalytic subunit of the tRNA-splicing endonuclease complex, a complex responsible for identification and cleavage of the splice sites in pre-tRNA. It cleaves pre-tRNA at the 5' and 3' splice sites to release the intron. The products are an intron and two tRNA half-molecules bearing 2',3' cyclic phosphate and 5'-OH termini. There are no conserved sequences at the splice sites, but the intron is invariably located at the same site in the gene, placing the splice sites an invariant distance from the constant structural features of the tRNA body. The tRNA splicing endonuclease is also involved in mRNA processing via its association with pre-mRNA 3'-end processing factors, establishing a link between pre-tRNA splicing and pre-mRNA 3'-end formation, suggesting that the endonuclease subunits function in multiple RNA-processing events. This is tRNA-splicing endonuclease subunit Sen15 (Tsen15) from Mus musculus (Mouse).